We begin with the raw amino-acid sequence, 196 residues long: Segregation and condensation protein B (196 aa).

Belongs to the ScpB family. As to quaternary structure, homodimer. Homodimerization may be required to stabilize the binding of ScpA to the Smc head domains. Component of a cohesin-like complex composed of ScpA, ScpB and the Smc homodimer, in which ScpA and ScpB bind to the head domain of Smc. The presence of the three proteins is required for the association of the complex with DNA.

The protein resides in the cytoplasm. Participates in chromosomal partition during cell division. May act via the formation of a condensin-like complex containing Smc and ScpA that pull DNA away from mid-cell into both cell halves. The protein is Segregation and condensation protein B of Lactobacillus johnsonii (strain CNCM I-12250 / La1 / NCC 533).